Consider the following 269-residue polypeptide: Hydroxyethylthiazole kinase (269 aa).

Met-45 contacts substrate. The ATP site is built by Arg-121 and Thr-167. Residue Gly-194 participates in substrate binding.

The protein belongs to the Thz kinase family. It depends on Mg(2+) as a cofactor.

The enzyme catalyses 5-(2-hydroxyethyl)-4-methylthiazole + ATP = 4-methyl-5-(2-phosphooxyethyl)-thiazole + ADP + H(+). It functions in the pathway cofactor biosynthesis; thiamine diphosphate biosynthesis; 4-methyl-5-(2-phosphoethyl)-thiazole from 5-(2-hydroxyethyl)-4-methylthiazole: step 1/1. Its function is as follows. Catalyzes the phosphorylation of the hydroxyl group of 4-methyl-5-beta-hydroxyethylthiazole (THZ). This chain is Hydroxyethylthiazole kinase, found in Bacillus mycoides (strain KBAB4) (Bacillus weihenstephanensis).